A 220-amino-acid polypeptide reads, in one-letter code: MENQSLMPREKLLKSGAETLENYELLAIFLRTGIKNCPVIQLSQAVLRYFGSLRGLISADQEQFCQFKGIGITQYIQLQACTEMTKRYLAEELTFAHEFTNPLTVRLYLQTELEHYEREVFSVLFLDNQHRLIKKEDMFRGTINAASVYPREIIKTALYCNAAALILAHNHPSGSAEPSASDKQMTKRIQAAAELMEIRVLDHFVIGKGCYFSFAEQDWL.

Positions glutamate 98 to leucine 220 constitute an MPN domain. Zn(2+) contacts are provided by histidine 169, histidine 171, and aspartate 182. A JAMM motif motif is present at residues histidine 169–aspartate 182.

Belongs to the UPF0758 family.

In Actinobacillus succinogenes (strain ATCC 55618 / DSM 22257 / CCUG 43843 / 130Z), this protein is UPF0758 protein Asuc_0013.